The following is a 247-amino-acid chain: Carboxy-S-adenosyl-L-methionine synthase (247 aa).

Residues Y40, 65–67, 90–91, 122–123, N137, and R204 each bind S-adenosyl-L-methionine; these read GAS, DN, and DI.

The protein belongs to the class I-like SAM-binding methyltransferase superfamily. Cx-SAM synthase family. In terms of assembly, homodimer.

It carries out the reaction prephenate + S-adenosyl-L-methionine = carboxy-S-adenosyl-L-methionine + 3-phenylpyruvate + H2O. Its function is as follows. Catalyzes the conversion of S-adenosyl-L-methionine (SAM) to carboxy-S-adenosyl-L-methionine (Cx-SAM). This chain is Carboxy-S-adenosyl-L-methionine synthase, found in Pseudomonas putida (strain ATCC 47054 / DSM 6125 / CFBP 8728 / NCIMB 11950 / KT2440).